We begin with the raw amino-acid sequence, 187 residues long: Elongation factor P (187 aa).

It belongs to the elongation factor P family.

The protein resides in the cytoplasm. It participates in protein biosynthesis; polypeptide chain elongation. Involved in peptide bond synthesis. Stimulates efficient translation and peptide-bond synthesis on native or reconstituted 70S ribosomes in vitro. Probably functions indirectly by altering the affinity of the ribosome for aminoacyl-tRNA, thus increasing their reactivity as acceptors for peptidyl transferase. This chain is Elongation factor P, found in Mycobacterium leprae (strain Br4923).